The sequence spans 220 residues: MPFRDLILFNLSKFLLTEDKESLEIVSSLCRGFEISYDDLITYFPDRKYHKYIYKVFEHVDLSEELSMEFHDTTLRDLVYLKLYKYSKCIRPCYKLGDNLKGIVVIKDRNIYIREANDDLIEYLLKEYTPQIYTYSNEHVPIAGSKLILCGFSQVTFMAYTTSHITTNKKVDVLVSKKCIDKLVDPINYQILQNLFDKGSGTINKILRKIFYSVTGGQTP.

The protein belongs to the orthopoxvirus OPG087 family. As to quaternary structure, interacts with H5 and A18. Might be part of a transcription complex composed at least of OPG087, OPG145, and OPG110.

In terms of biological role, involved in postreplicative transcription elongation on intermediate and late genes. The polypeptide is Late transcription elongation factor OPG087 (OPG087) (Homo sapiens (Human)).